The sequence spans 217 residues: ATP-dependent Clp protease proteolytic subunit (217 aa).

Ser-119 serves as the catalytic Nucleophile. The active site involves His-144.

This sequence belongs to the peptidase S14 family. In terms of assembly, fourteen ClpP subunits assemble into 2 heptameric rings which stack back to back to give a disk-like structure with a central cavity, resembling the structure of eukaryotic proteasomes.

The protein localises to the cytoplasm. The enzyme catalyses Hydrolysis of proteins to small peptides in the presence of ATP and magnesium. alpha-casein is the usual test substrate. In the absence of ATP, only oligopeptides shorter than five residues are hydrolyzed (such as succinyl-Leu-Tyr-|-NHMec, and Leu-Tyr-Leu-|-Tyr-Trp, in which cleavage of the -Tyr-|-Leu- and -Tyr-|-Trp bonds also occurs).. Its function is as follows. Cleaves peptides in various proteins in a process that requires ATP hydrolysis. Has a chymotrypsin-like activity. Plays a major role in the degradation of misfolded proteins. The chain is ATP-dependent Clp protease proteolytic subunit from Bordetella bronchiseptica (strain ATCC BAA-588 / NCTC 13252 / RB50) (Alcaligenes bronchisepticus).